Here is a 290-residue protein sequence, read N- to C-terminus: Carbonic anhydrase-related protein (290 aa).

S5 is modified (phosphoserine). The Alpha-carbonic anhydrase domain maps to 27 to 289 (VEWGYEEGVE…LSDRVIRAAF (263 aa)). Residue H87 is the Proton donor/acceptor of the active site. Positions 118 and 141 each coordinate Zn(2+).

It belongs to the alpha-carbonic anhydrase family.

Functionally, does not have a carbonic anhydrase catalytic activity. This Rattus norvegicus (Rat) protein is Carbonic anhydrase-related protein (Ca8).